The primary structure comprises 587 residues: MPVVGKIIKIAGPVVVAEGMKGAQMYEVVKVGEEKLTGEIIQLHDDKAVIQVYEETSGIKPGEPVVGTGAPLSVELGPGMLRAMYDGIQRPLTAIEEKTGSIFIPRGVDVPALPRDIKWEFKPVVNEGDYVEEGDIIGTVDETPSIVHKILVPIGVKGKIVEIKEGKFTVEETVAVVETENGERKEITMMQKWPVRKPRPYKEKLPPEIPLITGQRVEDTFFTLAKGGTAAIPGPFGSGKTVTQHQLAKWSDADVVVYIGCGERGNEMTEVIEEFPHLEDIRTGNKLMDRTVLIANTSNMPVAAREASVYTGITIAEYFRDMGYGVLLTADSTSRWAEAMREISGRLEEMPGEEGYPAYLASRLAQFYERAGRVITLGKDNRQGFVCIVGAVSPPGGDFSEPVTSNTLRIVKVFWALDANLARRRHFPAINWLQSYSLYIDDVTEWWNTNTGPDWRQLRDEAMSLLQKEAELQEIVQLVGPDALPDRERVILEVARMLREDFLQQDAFDEVDTYCPPMKQYLMLKIIMTFYQEALKAVERGVEPAKILGVSVKQDIARMKYIPHDEFINVKSKEIMEKIKNELGSLN.

Position 234–241 (234–241) interacts with ATP; the sequence is GPFGSGKT.

Belongs to the ATPase alpha/beta chains family. As to quaternary structure, the N-terminus (approximately residues 106-122) interacts with subunit H. Has multiple subunits with at least A(3), B(3), C, D, E(1 or 2), F, H(2), I and proteolipid K(x).

The protein localises to the cell membrane. The enzyme catalyses ATP + H2O + 4 H(+)(in) = ADP + phosphate + 5 H(+)(out). With respect to regulation, ATP hydrolysis is inhibited by N',N'-dicyclohexylcarbodiimide. Functionally, component of the A-type ATP synthase that produces ATP from ADP in the presence of a proton gradient across the membrane. The A chain is the catalytic subunit. Hydrolyzes ATP, GTP (86% of ATPase rate) and UTP (54% of ATPase rate), has very poor activity on CTP. The protein is A-type ATP synthase subunit A of Methanocaldococcus jannaschii (strain ATCC 43067 / DSM 2661 / JAL-1 / JCM 10045 / NBRC 100440) (Methanococcus jannaschii).